The sequence spans 194 residues: Cysteine and glycine-rich protein 3 (194 aa).

Residues 1–5 (MPNWG) are interaction with TCAP. The LIM zinc-binding 1 domain maps to 10 to 61 (CGACEKTVYHAEEIQCNGRSFHKTCFHCMACRKALDSTTVAAHESEIYCKVC). The short motif at 64 to 69 (RRYGPK) is the Nuclear localization signal element. The interval 94-105 (QSPKPARSVTTS) is interaction with CLF2 and isoform 2. A phosphoserine mark is found at S95 and S153. The LIM zinc-binding 2 domain occupies 120 to 171 (CPRCGKSVYAAEKVMGGGKPWHKTCFRCAICGKSLESTNVTDKDGELYCKVC).

In terms of assembly, self-associates. Oligomeric in the cytoplasm and monomeric in the nucleus. Homooligomers preferentially form along the actin cytoskeleton. Isoform 2 interacts with isoform 1. Isoform 1 but not isoform 2 interacts with MYOD1 and MYOG. Isoform 1 interacts with TCAP, ACTN2 and NRAP. Isoform 2 interacts with TCAP and alpha-actinin. Interacts with LDHD. Interacts (via N-terminus)with GLRX3 (via C-terminus) and PPP3CA; GLRX3 and calcineurin compete for interaction with CSRP3. Interacts with MYF6. Interacts with CFL2; the stoichiometry influences F-actin depolymerization and possibly two molecules of CFL2 can interact with one molecule of CSRP3 resulting in the highest functional impact; the interaction is stronger with phosphorylated CFL2. Post-translationally, phosphorylated by PKC/PRKCA. Cardiac and slow-twitch skeletal muscles. Isoform 2 is expressed in striated muscle. Isoform 2 is specifically expressed at higher levels in patients with neuromuscular diseases, such as limb-girdle muscular dystrophy 2A (LGMD2A), Duchenne muscular dystrophy (DMD) and dermatomyositis.

The protein localises to the nucleus. It localises to the cytoplasm. It is found in the cytoskeleton. The protein resides in the myofibril. Its subcellular location is the sarcomere. The protein localises to the z line. Positive regulator of myogenesis. Acts as a cofactor for myogenic bHLH transcription factors such as MYOD1, and probably MYOG and MYF6. Enhances the DNA-binding activity of the MYOD1:TCF3 isoform E47 complex and may promote formation of a functional MYOD1:TCF3 isoform E47:MEF2A complex involved in myogenesis. Plays a crucial and specific role in the organization of cytosolic structures in cardiomyocytes. Could play a role in mechanical stretch sensing. May be a scaffold protein that promotes the assembly of interacting proteins at Z-line structures. It is essential for calcineurin anchorage to the Z line. Required for stress-induced calcineurin-NFAT activation. The role in regulation of cytoskeleton dynamics by association with CFL2 is reported conflictingly: Shown to enhance CFL2-mediated F-actin depolymerization dependent on the CSRP3:CFL2 molecular ratio, and also shown to reduce the ability of CLF1 and CFL2 to enhance actin depolymerization. Proposed to contribute to the maintenance of muscle cell integrity through an actin-based mechanism. Can directly bind to actin filaments, cross-link actin filaments into bundles without polarity selectivity and protect them from dilution- and cofilin-mediated depolymerization; the function seems to involve its self-association. In vitro can inhibit PKC/PRKCA activity. Proposed to be involved in cardiac stress signaling by down-regulating excessive PKC/PRKCA signaling. Its function is as follows. May play a role in early sarcomere organization. Overexpression in myotubes negatively regulates myotube differentiation. By association with isoform 1 and thus changing the CSRP3 isoform 1:CFL2 stoichiometry is proposed to down-regulate CFL2-mediated F-actin depolymerization. The sequence is that of Cysteine and glycine-rich protein 3 (CSRP3) from Homo sapiens (Human).